The sequence spans 386 residues: Galactokinase (386 aa).

32–35 (EHTD) serves as a coordination point for substrate. ATP contacts are provided by residues Ser66 and 123–129 (GASLSSS). Ser129 and Glu161 together coordinate Mg(2+). Catalysis depends on Asp173, which acts as the Proton acceptor. Tyr223 serves as a coordination point for substrate.

The protein belongs to the GHMP kinase family. GalK subfamily.

Its subcellular location is the cytoplasm. It catalyses the reaction alpha-D-galactose + ATP = alpha-D-galactose 1-phosphate + ADP + H(+). It functions in the pathway carbohydrate metabolism; galactose metabolism. In terms of biological role, catalyzes the transfer of the gamma-phosphate of ATP to D-galactose to form alpha-D-galactose-1-phosphate (Gal-1-P). This chain is Galactokinase, found in Staphylococcus saprophyticus subsp. saprophyticus (strain ATCC 15305 / DSM 20229 / NCIMB 8711 / NCTC 7292 / S-41).